The following is an 827-amino-acid chain: Protein arginine N-methyltransferase 9 (827 aa).

2 TPR repeats span residues 54-87 (QYSLFKWAEELYALNRSQDLFNCYEQALELFPID) and 88-121 (DVICNSMGEHLFRLGFRDEAAGYFYKALKLNPSS). SAM-dependent MTase PRMT-type domains lie at 124–453 (AKEN…YLRL) and 511–827 (NAVY…RPLQ).

Belongs to the class I-like SAM-binding methyltransferase superfamily. Protein arginine N-methyltransferase family.

It is found in the cytoplasm. It catalyses the reaction L-arginyl-[protein] + 2 S-adenosyl-L-methionine = N(omega),N(omega)'-dimethyl-L-arginyl-[protein] + 2 S-adenosyl-L-homocysteine + 2 H(+). Functionally, arginine methyltransferase that can both catalyze the formation of omega-N monomethylarginine (MMA) and symmetrical dimethylarginine (sDMA). In Xenopus laevis (African clawed frog), this protein is Protein arginine N-methyltransferase 9 (prmt9).